The following is a 1070-amino-acid chain: MLGVGNEGMSTLPGLNQIQFEGFCRFIDRGLTEELFKFPKIEDTDQEIEFQLFVETYQLVEPSIKEKDAVYESLTYSSELYVSAGLIWKNSKNIQEQTIFIGNIPLMNSLGTSIVNGIYRIVINQILQSPGIYYQSELDHKGISVYTGTIISDWGGRLELEIDRKARIWARVSRKQKISILVLSSAMGSNLNEILENVCYPEIFLSFLNDKEEKKIGSKESAILEFYRQFACVGGDPVFPESLCRELQKKFFQQRCELGEIGRRNMNRRLNLDIPQNNTFLLPRDILTAADHLIGMKFRMGTLDDMNHLKNKRIRSVADLLQDQFGLALVRLENMVRGTICGAIRYKLIPTPQNLVTSTPLTTTYESFFGLHPLSQVLDRTNPLTQIVHGRKLSYLGPGGLTGRTASFRIRDIHSSHYGRICPIDTSEGINVGLIGSLAIHARIGRWGSIESPFFEISERSKRIHMLYLSPSRDEYYMIATGNYLALNQGNQEEQIVPARYRQEFLTIAWEQVHLRSIFSFQYFSIGASLIPFIEHNDANRALMSSNMQRQAVPLSQSEKCIVGTGLERQVALDSGTLAIAEHEGKIIYKDTNKIVLFGSGETLSVPLVIYRRSNKNTCMHQKSQVQRGKCIKRGQILADGAATVGGELSLGKNVLVAYMPWEGYNSEDAVLISDRLVYEDIYTSFHIRKYEIQTHVTSNGPERITNKIPHLEVHLLRNLDKNGLVILGSWVEAGDILVGKLTPQMAKESSYAPEDRLLRAILGIQVSTSKETCLKLPIGGRGRVIDVRWLHKKGGSGYNPETIHIYILQKREIKVGDKVAGRHGNKGIVSKILARQDMPYLQDGRPVDMVFNPLGVPSRMNVGQIFECSLGLAGDVLDRHYRIAPFDERYEQEASRKLVFSELYQASKQTSNPWIFEPEYPGKSRIFDGRTGTPFEQPVIIGNPYILKLIHQVDDKIHGRSSGHYALVTQQPLKGRAKQGGQRVGEMEVWALEGFGVAHILQEMLTYKSDHIKARQEVLGTTIIGGTISKPVDAPESFRLLVRELRSLALELNHFLVSEKNFRIHRKEV.

The protein belongs to the RNA polymerase beta chain family. In terms of assembly, in plastids the minimal PEP RNA polymerase catalytic core is composed of four subunits: alpha, beta, beta', and beta''. When a (nuclear-encoded) sigma factor is associated with the core the holoenzyme is formed, which can initiate transcription.

The protein localises to the plastid. It localises to the chloroplast. It catalyses the reaction RNA(n) + a ribonucleoside 5'-triphosphate = RNA(n+1) + diphosphate. Its function is as follows. DNA-dependent RNA polymerase catalyzes the transcription of DNA into RNA using the four ribonucleoside triphosphates as substrates. The sequence is that of DNA-directed RNA polymerase subunit beta from Lotus japonicus (Lotus corniculatus var. japonicus).